A 364-amino-acid chain; its full sequence is Probable secreted lipase phiG (364 aa).

The N-terminal stretch at 1–18 (MMPFMDLILSILVSSVLL) is a signal peptide. An N-linked (GlcNAc...) asparagine glycan is attached at asparagine 49. Residue serine 203 is the Nucleophile of the active site. Asparagine 262 carries N-linked (GlcNAc...) asparagine glycosylation.

This sequence belongs to the AB hydrolase superfamily.

Its subcellular location is the secreted. It catalyses the reaction a carboxylic ester + H2O = an alcohol + a carboxylate + H(+). In terms of biological role, part of the gene cluster that mediates the biosynthesis of the antihypercholesterolemic agents phomoidrides which are dimeric anhydrides. The function of phiG within the pathway has still to be determined. The pathway begins with the highly reducing polyketide synthase phiA that catalyzes the formation of a C12-fatty acyl-ACP, starting from one acetate and 5 malonate units. The hydrolase phiM is involved in the release of the C12-fatty acyl chain from phiA. The alkylcitrate synthase (ACS) phiJ and the alkylcitrate dehydratase (ACDH) phiI then give rise to decarboxylated monomeric anhydrides by coupling the C12-fatty acyl chain with oxalacetic acid. The cyclase phiC is responsible for the dimerization of the monomeric anhydrides which leads to the production of prephomoidride that contains the characteristic bicyclo[4.3.1]deca-1,6-diene system of phomoidrides. Iterative oxidation catalyzed by the alpha-ketoglutarate-dependent dioxygenase phiK produced then phomoidride A. Finally, the methyltransferase phiE converts phomoidride A to phomoidride B via an acetalization reaction. The phosphatidylethanolamine-binding protein phiB and phiN are not essential for dimerization and their functions have still to be determined. The sequence is that of Probable secreted lipase phiG from Fungal sp. (strain ATCC 74256).